A 510-amino-acid polypeptide reads, in one-letter code: NAD(P)H-quinone oxidoreductase subunit 2 A, chloroplastic (510 aa).

12 consecutive transmembrane segments (helical) span residues 31–51 (FIFP…IDLT), 59–79 (WFYF…LFRW), 99–119 (IFQF…VEYI), 124–144 (MAIT…MFLC), 149–169 (LITI…LSGY), 183–203 (YLLM…WLYG), 229–249 (ISIA…PAPF), 295–315 (WHLL…LLAI), 323–343 (MLAY…IVGD), 354–374 (YMLF…LFGL), 395–415 (ALSL…AGFF), and 418–438 (LYLF…IGLL).

This sequence belongs to the complex I subunit 2 family. As to quaternary structure, NDH is composed of at least 16 different subunits, 5 of which are encoded in the nucleus.

The protein localises to the plastid. Its subcellular location is the chloroplast thylakoid membrane. The enzyme catalyses a plastoquinone + NADH + (n+1) H(+)(in) = a plastoquinol + NAD(+) + n H(+)(out). The catalysed reaction is a plastoquinone + NADPH + (n+1) H(+)(in) = a plastoquinol + NADP(+) + n H(+)(out). Its function is as follows. NDH shuttles electrons from NAD(P)H:plastoquinone, via FMN and iron-sulfur (Fe-S) centers, to quinones in the photosynthetic chain and possibly in a chloroplast respiratory chain. The immediate electron acceptor for the enzyme in this species is believed to be plastoquinone. Couples the redox reaction to proton translocation, and thus conserves the redox energy in a proton gradient. The sequence is that of NAD(P)H-quinone oxidoreductase subunit 2 A, chloroplastic from Saccharum officinarum (Sugarcane).